The following is a 645-amino-acid chain: 1,4-alpha-glucan branching enzyme GlgB (645 aa).

Aspartate 309 serves as the catalytic Nucleophile. Glutamate 352 (proton donor) is an active-site residue. A disordered region spans residues 619–645 (VKTRKGSKKQDGSKTKVRSNVTSRGKR). Over residues 636-645 (RSNVTSRGKR) the composition is skewed to polar residues.

It belongs to the glycosyl hydrolase 13 family. GlgB subfamily. As to quaternary structure, monomer.

The catalysed reaction is Transfers a segment of a (1-&gt;4)-alpha-D-glucan chain to a primary hydroxy group in a similar glucan chain.. Its pathway is glycan biosynthesis; glycogen biosynthesis. In terms of biological role, catalyzes the formation of the alpha-1,6-glucosidic linkages in glycogen by scission of a 1,4-alpha-linked oligosaccharide from growing alpha-1,4-glucan chains and the subsequent attachment of the oligosaccharide to the alpha-1,6 position. The protein is 1,4-alpha-glucan branching enzyme GlgB of Bacillus cereus (strain ATCC 14579 / DSM 31 / CCUG 7414 / JCM 2152 / NBRC 15305 / NCIMB 9373 / NCTC 2599 / NRRL B-3711).